Here is a 145-residue protein sequence, read N- to C-terminus: Leghemoglobin-2 (145 aa).

A Globin domain is found at Ala3 to Tyr145. A nitrated tyrosine mark is found at Tyr26 and Tyr31. Ser46 contacts heme b. Phosphoserine is present on Ser46. His62 lines the O2 pocket. Residues Lys65, His93, and Lys96 each coordinate heme b. Tyr134 carries the post-translational modification Nitrated tyrosine.

This sequence belongs to the plant globin family. As to quaternary structure, monomer. In terms of processing, nitrated in effective nodules and particularly in hypoxic conditions; this mechanism may play a protective role in the symbiosis by buffering toxic peroxynitrite NO(2)(-). Nitration level decrease during nodule senescence. Phosphorylation at Ser-46 disrupts the molecular environment of its porphyrin ring oxygen binding pocket, thus leading to a reduced oxygen consumption and to the delivery of oxygen O(2) to symbiosomes. In terms of tissue distribution, root nodules.

Its subcellular location is the cytoplasm. It localises to the cytosol. It is found in the nucleus. Its function is as follows. Leghemoglobin that reversibly binds oxygen O(2) through a pentacoordinated heme iron. In root nodules, facilitates the diffusion of oxygen to the bacteroids while preventing the bacterial nitrogenase from being inactivated by buffering dioxygen, nitric oxide and carbon monoxide, and promoting the formation of reactive oxygen species (ROS, e.g. H(2)O(2)). This role is essential for symbiotic nitrogen fixation (SNF). In Vigna unguiculata (Cowpea), this protein is Leghemoglobin-2.